We begin with the raw amino-acid sequence, 259 residues long: Ribosomal RNA small subunit methyltransferase A (259 aa).

Residues Asn13, Leu15, Gly40, Glu61, Asp85, and Asn103 each coordinate S-adenosyl-L-methionine.

This sequence belongs to the class I-like SAM-binding methyltransferase superfamily. rRNA adenine N(6)-methyltransferase family. RsmA subfamily.

The protein resides in the cytoplasm. It carries out the reaction adenosine(1518)/adenosine(1519) in 16S rRNA + 4 S-adenosyl-L-methionine = N(6)-dimethyladenosine(1518)/N(6)-dimethyladenosine(1519) in 16S rRNA + 4 S-adenosyl-L-homocysteine + 4 H(+). In terms of biological role, specifically dimethylates two adjacent adenosines (A1518 and A1519) in the loop of a conserved hairpin near the 3'-end of 16S rRNA in the 30S particle. May play a critical role in biogenesis of 30S subunits. The sequence is that of Ribosomal RNA small subunit methyltransferase A from Neisseria gonorrhoeae (strain ATCC 700825 / FA 1090).